The primary structure comprises 421 residues: E3 ubiquitin-protein ligase MARCHF4 (421 aa).

An N-terminal signal peptide occupies residues 1–16 (MLLAIGVIVWCWGLLS). The segment at 60–79 (ELNAEGNATSSATESHSLAN) is disordered. Over residues 65-77 (GNATSSATESHSL) the composition is skewed to polar residues. Residues 135-195 (DSGVRTPLCR…ELCYYKYQVI (61 aa)) form an RING-CH-type zinc finger. Residues Cys-143, Cys-146, Cys-159, Cys-161, His-169, Cys-172, Cys-185, and Cys-188 each contribute to the Zn(2+) site. 2 helical membrane-spanning segments follow: residues 218–238 (IAAA…LVWS) and 252–272 (LFQI…ALIV). 2 disordered regions span residues 319 to 385 (PLTH…LPDH) and 401 to 421 (QEPR…VTTV). Polar residues-rich tracts occupy residues 367–380 (TEPQ…NGQP) and 403–412 (PRGQTSNSNR).

It is found in the golgi apparatus membrane. The catalysed reaction is S-ubiquitinyl-[E2 ubiquitin-conjugating enzyme]-L-cysteine + [acceptor protein]-L-lysine = [E2 ubiquitin-conjugating enzyme]-L-cysteine + N(6)-ubiquitinyl-[acceptor protein]-L-lysine.. It participates in protein modification; protein ubiquitination. E3 ubiquitin-protein ligase. E3 ubiquitin ligases accept ubiquitin from an E2 ubiquitin-conjugating enzyme in the form of a thioester and then directly transfer the ubiquitin to targeted substrates. The chain is E3 ubiquitin-protein ligase MARCHF4 (marchf4) from Danio rerio (Zebrafish).